The chain runs to 220 residues: Octanoyltransferase (220 aa).

Residues 27–208 (PGTADEIWLC…QLARAHGQAV (182 aa)) form the BPL/LPL catalytic domain. Residues 66 to 73 (RGGQVTYH), 139 to 141 (ALG), and 152 to 154 (GLA) contribute to the substrate site. Cys170 (acyl-thioester intermediate) is an active-site residue.

This sequence belongs to the LipB family.

The protein resides in the cytoplasm. It carries out the reaction octanoyl-[ACP] + L-lysyl-[protein] = N(6)-octanoyl-L-lysyl-[protein] + holo-[ACP] + H(+). Its pathway is protein modification; protein lipoylation via endogenous pathway; protein N(6)-(lipoyl)lysine from octanoyl-[acyl-carrier-protein]: step 1/2. In terms of biological role, catalyzes the transfer of endogenously produced octanoic acid from octanoyl-acyl-carrier-protein onto the lipoyl domains of lipoate-dependent enzymes. Lipoyl-ACP can also act as a substrate although octanoyl-ACP is likely to be the physiological substrate. This chain is Octanoyltransferase, found in Bordetella bronchiseptica (strain ATCC BAA-588 / NCTC 13252 / RB50) (Alcaligenes bronchisepticus).